Consider the following 335-residue polypeptide: Cytoskeleton protein RodZ (335 aa).

The Cytoplasmic portion of the chain corresponds to 1–111; sequence MNTEATHDQN…LGKRRKKRDG (111 aa). Residues 19–71 form the HTH cro/C1-type domain; that stretch reads LRNAREQLGLSQQAVAERLCLKVSTVRDIEEDKAPADLASTFLRGYIRSYARL. The segment at residues 30–49 is a DNA-binding region (H-T-H motif); it reads QQAVAERLCLKVSTVRDIEE. A helical; Signal-anchor for type II membrane protein transmembrane segment spans residues 112-132; sequence WLMTFTWLVLFVVIGLSGAWW. Over 133–335 the chain is Periplasmic; sequence WQDHKAQQEE…TLNAEQSPAQ (203 aa). Residues 148-164 show a composition bias toward polar residues; that stretch reads DQSSAELNNNQSQSVPL. Residues 148–244 form a disordered region; it reads DQSSAELNNN…PLPTDQAGVT (97 aa). 2 stretches are compositionally biased toward low complexity: residues 165–205 and 217–239; these read DTST…DPQQ and DTAA…LPTD.

It belongs to the RodZ family.

It localises to the cell inner membrane. Its function is as follows. Cytoskeletal protein that is involved in cell-shape control through regulation of the length of the long axis. The protein is Cytoskeleton protein RodZ of Escherichia coli O6:H1 (strain CFT073 / ATCC 700928 / UPEC).